The following is a 217-amino-acid chain: Cysteine-rich protein 3 (217 aa).

One can recognise an LIM zinc-binding 1 domain in the interval 3–64; the sequence is WTCPRCQQPV…KPCYGALFGP (62 aa). The segment at 84-112 is disordered; it reads PGCTTPLSPSSFSPPRPRTGLPQGKKSPP. The 62-residue stretch at 122-183 folds into the LIM zinc-binding 2 domain; sequence SLCPGCGEPV…VPCYGYLFGP (62 aa).

As to expression, expressed in most tissues, but not in skeletal muscle.

The protein resides in the cytoplasm. The sequence is that of Cysteine-rich protein 3 (CRIP3) from Homo sapiens (Human).